A 1295-amino-acid chain; its full sequence is DNA-directed RNA polymerase subunit beta' (1295 aa).

Cysteine 60, cysteine 62, cysteine 75, and cysteine 78 together coordinate Zn(2+). Mg(2+) is bound by residues aspartate 516, aspartate 518, and aspartate 520. Zn(2+) contacts are provided by cysteine 841, cysteine 914, cysteine 921, and cysteine 924.

This sequence belongs to the RNA polymerase beta' chain family. In terms of assembly, the RNAP catalytic core consists of 2 alpha, 1 beta, 1 beta' and 1 omega subunit. When a sigma factor is associated with the core the holoenzyme is formed, which can initiate transcription. Mg(2+) is required as a cofactor. Requires Zn(2+) as cofactor.

The catalysed reaction is RNA(n) + a ribonucleoside 5'-triphosphate = RNA(n+1) + diphosphate. In terms of biological role, DNA-dependent RNA polymerase catalyzes the transcription of DNA into RNA using the four ribonucleoside triphosphates as substrates. The protein is DNA-directed RNA polymerase subunit beta' of Dehalococcoides mccartyi (strain CBDB1).